A 129-amino-acid chain; its full sequence is Fluoride-specific ion channel FluC 2 (129 aa).

4 helical membrane-spanning segments follow: residues 3-23 (FLYV…MNLW), 32-52 (ATLA…RFLA), 59-79 (LVLL…FSAF), and 90-110 (GAWL…LIMV). Positions 71 and 74 each coordinate Na(+).

It belongs to the fluoride channel Fluc/FEX (TC 1.A.43) family.

The protein resides in the cell membrane. It carries out the reaction fluoride(in) = fluoride(out). Na(+) is not transported, but it plays an essential structural role and its presence is essential for fluoride channel function. Functionally, fluoride-specific ion channel. Important for reducing fluoride concentration in the cell, thus reducing its toxicity. This is Fluoride-specific ion channel FluC 2 from Listeria monocytogenes serovar 1/2a (strain ATCC BAA-679 / EGD-e).